The primary structure comprises 141 residues: Nuclear transcription factor Y subunit B-1 (141 aa).

The segment at 1-23 (MADTPSSPAGDGGESGGSVREQD) is disordered. Ala2 carries the N-acetylalanine modification. A DNA-binding region spans residues 26 to 32 (LPIANIS). The segment at 53–64 (VQECVSEFISFI) is subunit association domain (SAD). Residues 114–141 (DNKGSGKSGDGSNRDAGGGVSGEEMPSW) are disordered.

It belongs to the NFYB/HAP3 subunit family. As to quaternary structure, heterotrimeric transcription factor composed of three components, NF-YA, NF-YB and NF-YC. NF-YB and NF-YC must interact and dimerize for NF-YA association and DNA binding. Binds directly with DPB3-1. As to expression, ubiquitous. Predominantly expressed in leaves, flowers and siliques.

It localises to the nucleus. Its function is as follows. Component of the NF-Y/HAP transcription factor complex. The NF-Y complex stimulates the transcription of various genes by recognizing and binding to a CCAAT motif in promoters. This Arabidopsis thaliana (Mouse-ear cress) protein is Nuclear transcription factor Y subunit B-1.